We begin with the raw amino-acid sequence, 205 residues long: Putative 3-methyladenine DNA glycosylase (205 aa).

The protein belongs to the DNA glycosylase MPG family.

This is Putative 3-methyladenine DNA glycosylase from Bacillus cereus (strain ATCC 14579 / DSM 31 / CCUG 7414 / JCM 2152 / NBRC 15305 / NCIMB 9373 / NCTC 2599 / NRRL B-3711).